A 244-amino-acid polypeptide reads, in one-letter code: Ribonuclease HII (244 aa).

Positions 31 to 222 (RLIAGVDEAG…VRLALQGREG (192 aa)) constitute an RNase H type-2 domain. A divalent metal cation-binding residues include D37, E38, and D130.

This sequence belongs to the RNase HII family. Mn(2+) serves as cofactor. Requires Mg(2+) as cofactor.

The protein resides in the cytoplasm. It carries out the reaction Endonucleolytic cleavage to 5'-phosphomonoester.. In terms of biological role, endonuclease that specifically degrades the RNA of RNA-DNA hybrids. In Xanthomonas axonopodis pv. citri (strain 306), this protein is Ribonuclease HII.